Reading from the N-terminus, the 544-residue chain is Zinc finger protein 502 (544 aa).

A Glycyl lysine isopeptide (Lys-Gly) (interchain with G-Cter in SUMO2) cross-link involves residue Lys-43. 14 consecutive C2H2-type zinc fingers follow at residues Trp-155–His-177, Tyr-183–His-205, Tyr-211–His-233, Tyr-239–His-261, Tyr-267–His-289, Tyr-295–His-317, His-323–His-345, Tyr-351–His-373, Tyr-379–His-401, Tyr-407–His-429, Tyr-435–His-457, Tyr-463–His-485, Tyr-491–His-513, and Tyr-519–His-541.

The protein belongs to the krueppel C2H2-type zinc-finger protein family. In terms of assembly, (Microbial infection) Interacts with human respiratory syncytial virus (HRSV) matrix protein; this interaction probably facilitates viral release.

The protein localises to the nucleus. Its function is as follows. May be involved in transcriptional regulation. In Homo sapiens (Human), this protein is Zinc finger protein 502 (ZNF502).